The primary structure comprises 659 residues: Exoribonuclease 2 (659 aa).

The 343-residue stretch at 189-531 (RENLTALHFV…NHRLIKAVLA (343 aa)) folds into the RNB domain. The S1 motif domain occupies 576–658 (NVEFNAEVQD…ATRSIVGEIL (83 aa)).

This sequence belongs to the RNR ribonuclease family. RNase II subfamily.

It is found in the cytoplasm. It carries out the reaction Exonucleolytic cleavage in the 3'- to 5'-direction to yield nucleoside 5'-phosphates.. Involved in mRNA degradation. Hydrolyzes single-stranded polyribonucleotides processively in the 3' to 5' direction. The chain is Exoribonuclease 2 from Haemophilus influenzae (strain 86-028NP).